The primary structure comprises 1121 residues: tRNA (34-2'-O)-methyltransferase regulator WDR6 (1121 aa).

Methionine 1 carries the post-translational modification N-acetylmethionine. WD repeat units lie at residues 53-97 (IKRV…VVKI), 105-143 (WELWRSGLWNMSDWIWDARWLEGNIALALGHNSVVLYDP), 147-189 (CILQ…VWYP), 200-238 (APDRRISGHVGIIFSMSYLESKGLLATASEDRSVRIWKV), 247-285 (RVQNIGHCFGHSARVWQVKLLENYLISAGEDCVCLVWSH), 289-327 (ILQAFRGHQGRGIRAIAAHERQAWVITGGDDSGIRLWHL), 335-376 (LGVS…LYDV), 381-422 (WEQL…VVPI), 425-470 (PTAA…ISAA), 476-520 (IFVK…LFPS), 559-598 (PVSTLPSLHGKQGVTSVTCHGGYVYTTGRDGAYYQLFVRD), 604-642 (VLRQKSCRGMNWLAGLRIVPDGSMVILGFHANEFVVWNP), 645-684 (HEKLHIVNCGGGHRSWAFSDTEAAMAFAYLKDGDVMLYRA), 739-785 (LTDI…VWGI), 848-893 (RNRH…LFLL), 901-946 (QLLA…FWDL), 970-1012 (GTPS…VFVL), 1036-1073 (EEYSVPCAHAAHVTGLKILSPSIMVSASIDQRLTFWRL), and 1079-1121 (TFMN…NWYD).

The protein belongs to the WD repeat WDR6 family. Interacts with FTSJ1; the interaction is direct, and required for 2'-O-methylation of position 34 in substrate tRNAs. Interacts with IRS4. Interacts with STK11/LKB1. In terms of tissue distribution, ubiquitous.

The protein resides in the cytoplasm. Functionally, together with methyltransferase FTSJ1, methylates the 2'-O-ribose of nucleotides at position 34 of the tRNA anticodon loop of substrate tRNAs. Required for the correct positioning of the substrate tRNA for methylation. Required to suppress amino acid starvation-induced autophagy. Enhances the STK11/LKB1-induced cell growth suppression activity. This Homo sapiens (Human) protein is tRNA (34-2'-O)-methyltransferase regulator WDR6 (WDR6).